A 206-amino-acid polypeptide reads, in one-letter code: Ribonuclease HII (206 aa).

The RNase H type-2 domain occupies 14 to 206; it reads ALVCGIDEAG…FRLRQLGEKP (193 aa). A divalent metal cation is bound by residues Asp-20, Glu-21, and Asp-117.

Belongs to the RNase HII family. Requires Mn(2+) as cofactor. Mg(2+) serves as cofactor.

The protein resides in the cytoplasm. It catalyses the reaction Endonucleolytic cleavage to 5'-phosphomonoester.. Functionally, endonuclease that specifically degrades the RNA of RNA-DNA hybrids. The polypeptide is Ribonuclease HII (Pelodictyon phaeoclathratiforme (strain DSM 5477 / BU-1)).